We begin with the raw amino-acid sequence, 220 residues long: MRERNAAGIGMTSQRTRDRLVDALAAQGIQDERVLSAMREVPRHLFVDEALESRAYENTPLPIGEGQTISQPWVVARMTELLLEPGVPERVLEVGTGSGYQAAVLARLVPRVYSIERIGSLLRRARERLQAVRLFNCQLRHGDGYEGWPEYAPYDGIIVTAAPDALPEALLEQLADGGRLVAPIGGAGYQELLVVDRRGDAYEQRRVAGVSFVPMLEGRV.

S70 is a catalytic residue.

The protein belongs to the methyltransferase superfamily. L-isoaspartyl/D-aspartyl protein methyltransferase family.

It localises to the cytoplasm. The enzyme catalyses [protein]-L-isoaspartate + S-adenosyl-L-methionine = [protein]-L-isoaspartate alpha-methyl ester + S-adenosyl-L-homocysteine. Functionally, catalyzes the methyl esterification of L-isoaspartyl residues in peptides and proteins that result from spontaneous decomposition of normal L-aspartyl and L-asparaginyl residues. It plays a role in the repair and/or degradation of damaged proteins. This is Protein-L-isoaspartate O-methyltransferase from Halorhodospira halophila (strain DSM 244 / SL1) (Ectothiorhodospira halophila (strain DSM 244 / SL1)).